A 214-amino-acid chain; its full sequence is Ras-related protein RABA5c (214 aa).

19–26 lines the GTP pocket; it reads GDSAVGKS. The short motif at 41 to 49 is the Effector region element; it reads SKATIGVEF. Residues 67–71, 125–128, and 155–156 contribute to the GTP site; these read DTAGQ, NKCD, and SA. S-geranylgeranyl cysteine attachment occurs at residues Cys-211 and Cys-212.

The protein belongs to the small GTPase superfamily. Rab family. Interacts (via C-terminus) with GDI1. Interacts with PUX8/SAY1. In terms of tissue distribution, expressed in roots and actively dividing cells.

The protein resides in the golgi apparatus membrane. It localises to the golgi apparatus. The protein localises to the trans-Golgi network membrane. It is found in the cell membrane. In terms of biological role, intracellular vesicle trafficking and protein transport. Binds GTP and GDP and possesses intrinsic GTPase activity. The chain is Ras-related protein RABA5c (RABA5C) from Arabidopsis thaliana (Mouse-ear cress).